Here is a 215-residue protein sequence, read N- to C-terminus: Probable peptidyl-prolyl cis-trans isomerase (215 aa).

Residues 38-197 (DGIYAVMETN…RRGAAAKRFV (160 aa)) form the PPIase cyclophilin-type domain.

It belongs to the cyclophilin-type PPIase family.

The enzyme catalyses [protein]-peptidylproline (omega=180) = [protein]-peptidylproline (omega=0). In terms of biological role, PPIases accelerate the folding of proteins. It catalyzes the cis-trans isomerization of proline imidic peptide bonds in oligopeptides. In Treponema pallidum (strain Nichols), this protein is Probable peptidyl-prolyl cis-trans isomerase (ppiB).